The sequence spans 209 residues: Glycolipid transfer protein B (209 aa).

A run of 2 repeats spans residues 45–55 and 56–66. The interval 45–66 is 2 X 12 AA approximate tandem repeats; sequence IKADITGNITKIRSVYESNPTQ. 48–55 is a binding site for beta-D-galactosyl-(1-&gt;4)-beta-D-glucosyl-(1&lt;-&gt;1)-N-[(9Z)-octadecenoyl]-sphing-4-enine; that stretch reads DITGNITK. His140 and Tyr207 together coordinate beta-D-galactosyl-(1-&gt;4)-beta-D-glucosyl-(1&lt;-&gt;1)-N-[(9Z)-octadecenoyl]-sphing-4-enine.

The protein belongs to the GLTP family.

Its subcellular location is the cytoplasm. Accelerates the intermembrane transfer of various glycolipids. Catalyzes the transfer of various glycosphingolipids between membranes but does not catalyze the transfer of phospholipids. May be involved in the intracellular translocation of glucosylceramides. In Xenopus laevis (African clawed frog), this protein is Glycolipid transfer protein B (gltp-b).